The chain runs to 398 residues: Phosphoglycerate kinase (398 aa).

Substrate is bound by residues 20–22 (DLN), Arg35, 58–61 (HLGR), Arg118, and Arg155. Residues Lys206, Gly295, Glu326, and 354–357 (GGDS) each bind ATP.

Belongs to the phosphoglycerate kinase family. In terms of assembly, monomer.

It is found in the cytoplasm. It catalyses the reaction (2R)-3-phosphoglycerate + ATP = (2R)-3-phospho-glyceroyl phosphate + ADP. Its pathway is carbohydrate degradation; glycolysis; pyruvate from D-glyceraldehyde 3-phosphate: step 2/5. The protein is Phosphoglycerate kinase of Onion yellows phytoplasma (strain OY-M).